Reading from the N-terminus, the 759-residue chain is Protein zyg-11 homolog A (759 aa).

LRR repeat units lie at residues leucine 204 to lysine 227, methionine 235 to histidine 260, and valine 490 to valine 513.

It belongs to the zyg-11 family.

Its function is as follows. Probably acts as a target recruitment subunit in an E3 ubiquitin ligase complex ZYGA-CUL2-elongin BC. The chain is Protein zyg-11 homolog A (ZYG11A) from Homo sapiens (Human).